Reading from the N-terminus, the 369-residue chain is Flagellar P-ring protein 2 (369 aa).

A signal peptide spans 1–24; it reads MCAFAAILSLLSVLLMATSRSSDA.

Belongs to the FlgI family. As to quaternary structure, the basal body constitutes a major portion of the flagellar organelle and consists of four rings (L,P,S, and M) mounted on a central rod.

The protein localises to the periplasm. The protein resides in the bacterial flagellum basal body. Its function is as follows. Assembles around the rod to form the L-ring and probably protects the motor/basal body from shearing forces during rotation. The protein is Flagellar P-ring protein 2 of Burkholderia thailandensis (strain ATCC 700388 / DSM 13276 / CCUG 48851 / CIP 106301 / E264).